A 261-amino-acid polypeptide reads, in one-letter code: Cytochrome c oxidase subunit 3 (261 aa).

The Mitochondrial matrix portion of the chain corresponds to 1-15 (MTHQTHAYHMVNPSP). The chain crosses the membrane as a helical span at residues 16 to 34 (WPLTGALSALLMTSGLIMW). Over 35-40 (FHFNST) the chain is Mitochondrial intermembrane. The helical transmembrane segment at 41-66 (TLLTLGLTTNMLTMYQWWRDVIREST) threads the bilayer. Topologically, residues 67–72 (FQGHHT) are mitochondrial matrix. The helical transmembrane segment at 73–105 (PTVQKGLRYGMILFIISEVLFFTGFFWAFYHSS) threads the bilayer. Over 106–128 (LAPTPELGGCWPPTGIHPLNPLE) the chain is Mitochondrial intermembrane. Residues 129–152 (VPLLNTSVLLASGVSITWAHHSLM) traverse the membrane as a helical segment. The Mitochondrial matrix segment spans residues 153–155 (EGN). The chain crosses the membrane as a helical span at residues 156–183 (RNPMLQALFITIALGIYFTLLQASEYYE). Residues 184–190 (APFTISD) are Mitochondrial intermembrane-facing. Residues 191–223 (GVYGSTFFVATGFHGLHVIIGSTFLIVCFFRQL) traverse the membrane as a helical segment. At 224-232 (KFHFTSNHH) the chain is on the mitochondrial matrix side. A helical membrane pass occupies residues 233-256 (FGFEAAAWYWHFVDVVWLFLYVSI). At 257–261 (YWWGS) the chain is on the mitochondrial intermembrane side.

It belongs to the cytochrome c oxidase subunit 3 family. Component of the cytochrome c oxidase (complex IV, CIV), a multisubunit enzyme composed of 14 subunits. The complex is composed of a catalytic core of 3 subunits MT-CO1, MT-CO2 and MT-CO3, encoded in the mitochondrial DNA, and 11 supernumerary subunits COX4I, COX5A, COX5B, COX6A, COX6B, COX6C, COX7A, COX7B, COX7C, COX8 and NDUFA4, which are encoded in the nuclear genome. The complex exists as a monomer or a dimer and forms supercomplexes (SCs) in the inner mitochondrial membrane with NADH-ubiquinone oxidoreductase (complex I, CI) and ubiquinol-cytochrome c oxidoreductase (cytochrome b-c1 complex, complex III, CIII), resulting in different assemblies (supercomplex SCI(1)III(2)IV(1) and megacomplex MCI(2)III(2)IV(2)).

The protein localises to the mitochondrion inner membrane. It catalyses the reaction 4 Fe(II)-[cytochrome c] + O2 + 8 H(+)(in) = 4 Fe(III)-[cytochrome c] + 2 H2O + 4 H(+)(out). Its function is as follows. Component of the cytochrome c oxidase, the last enzyme in the mitochondrial electron transport chain which drives oxidative phosphorylation. The respiratory chain contains 3 multisubunit complexes succinate dehydrogenase (complex II, CII), ubiquinol-cytochrome c oxidoreductase (cytochrome b-c1 complex, complex III, CIII) and cytochrome c oxidase (complex IV, CIV), that cooperate to transfer electrons derived from NADH and succinate to molecular oxygen, creating an electrochemical gradient over the inner membrane that drives transmembrane transport and the ATP synthase. Cytochrome c oxidase is the component of the respiratory chain that catalyzes the reduction of oxygen to water. Electrons originating from reduced cytochrome c in the intermembrane space (IMS) are transferred via the dinuclear copper A center (CU(A)) of subunit 2 and heme A of subunit 1 to the active site in subunit 1, a binuclear center (BNC) formed by heme A3 and copper B (CU(B)). The BNC reduces molecular oxygen to 2 water molecules using 4 electrons from cytochrome c in the IMS and 4 protons from the mitochondrial matrix. The sequence is that of Cytochrome c oxidase subunit 3 (MT-CO3) from Madoqua guentheri (Guenther's dik-dik).